The sequence spans 489 residues: Pup--protein ligase (489 aa).

Residue glutamate 25 coordinates Mg(2+). Arginine 69 is a binding site for ATP. A Mg(2+)-binding site is contributed by tyrosine 71. Aspartate 73 functions as the Proton acceptor in the catalytic mechanism. Mg(2+) is bound at residue glutamate 79. Threonine 82 and tryptophan 447 together coordinate ATP.

Belongs to the Pup ligase/Pup deamidase family. Pup-conjugating enzyme subfamily.

It catalyses the reaction ATP + [prokaryotic ubiquitin-like protein]-L-glutamate + [protein]-L-lysine = ADP + phosphate + N(6)-([prokaryotic ubiquitin-like protein]-gamma-L-glutamyl)-[protein]-L-lysine.. The protein operates within protein degradation; proteasomal Pup-dependent pathway. It participates in protein modification; protein pupylation. Functionally, catalyzes the covalent attachment of the prokaryotic ubiquitin-like protein modifier Pup to the proteasomal substrate proteins, thereby targeting them for proteasomal degradation. This tagging system is termed pupylation. The ligation reaction involves the side-chain carboxylate of the C-terminal glutamate of Pup and the side-chain amino group of a substrate lysine. The polypeptide is Pup--protein ligase (Corynebacterium efficiens (strain DSM 44549 / YS-314 / AJ 12310 / JCM 11189 / NBRC 100395)).